We begin with the raw amino-acid sequence, 322 residues long: MVNSLSRILFCSLLIFSVISLREERLETAPITDDPWDLDGPCQKYVEKLAVVQSEMVACATNWSIPPVVCTKCFQNYINFKQFEYETKNLNNVYSLDNRTCSQVIYDNYLLSYSTDISKALTSEIWEKSRCDSCITIKWNFPQNKSEVSFSERTMQFQNRMYEWRNCVVNYTSGGVLDDNLTNGSKICNLCKTTFDELFGYYWKIYTTPDVDFCVDVETTMNDTIHLWDDVWKCAEKQDRNRDLFGIMITFGTLLLLTALFYAASYIQGGGETRRLIQYARLSDPHGQRSRLLSSGMSDADLVSRVSPGSSVLYNVPIHQTR.

A signal peptide spans 1–20; that stretch reads MVNSLSRILFCSLLIFSVIS. Asn62, Asn98, Asn144, Asn170, Asn180, Asn183, and Asn222 each carry an N-linked (GlcNAc...) asparagine glycan. Residues 244-264 form a helical membrane-spanning segment; that stretch reads LFGIMITFGTLLLLTALFYAA.

This sequence belongs to the OSTM1 family.

It localises to the membrane. Modulates the transport of substances from the endosomal to lysosomal compartments. Plays a role in lysosome formation and function in coelomocytes. This is Coelomocyte uptake defective protein 15 from Caenorhabditis elegans.